The following is a 524-amino-acid chain: Protopine 6-monooxygenase (524 aa).

3 helical membrane-spanning segments follow: residues 4–24 (LMLA…VFLY), 232–252 (LASL…DIFQ), and 319–339 (MIMG…SLLM). Heme is bound at residue cysteine 462.

This sequence belongs to the cytochrome P450 family. Heme is required as a cofactor.

It is found in the endoplasmic reticulum membrane. The catalysed reaction is protopine + reduced [NADPH--hemoprotein reductase] + O2 = 6-hydroxyprotopine + oxidized [NADPH--hemoprotein reductase] + H2O + H(+). It participates in alkaloid biosynthesis. In terms of biological role, catalyzes the conversion of protopine and allocryptopine to dihydrosanguinarine and dihydrochelerythrine, respectively, in the biosynthesis of isoquinoline alkaloid sanguinarine. The sequence is that of Protopine 6-monooxygenase (CYP82N2v2) from Eschscholzia californica (California poppy).